We begin with the raw amino-acid sequence, 285 residues long: ATP synthase subunit a (285 aa).

6 consecutive transmembrane segments (helical) span residues 41 to 61 (TWHV…LWIF), 102 to 122 (IAPL…MDLI), 164 to 184 (LGVF…GGFI), 197 to 217 (VFVQ…ALVS), 226 to 246 (LFGN…IGFM), and 252 to 272 (FVWA…FMML).

It belongs to the ATPase A chain family. In terms of assembly, F-type ATPases have 2 components, CF(1) - the catalytic core - and CF(0) - the membrane proton channel. CF(1) has five subunits: alpha(3), beta(3), gamma(1), delta(1), epsilon(1). CF(0) has three main subunits: a(1), b(2) and c(9-12). The alpha and beta chains form an alternating ring which encloses part of the gamma chain. CF(1) is attached to CF(0) by a central stalk formed by the gamma and epsilon chains, while a peripheral stalk is formed by the delta and b chains.

Its subcellular location is the cell inner membrane. In terms of biological role, key component of the proton channel; it plays a direct role in the translocation of protons across the membrane. In Pseudoalteromonas translucida (strain TAC 125), this protein is ATP synthase subunit a.